We begin with the raw amino-acid sequence, 154 residues long: Oleosin 16.4 kDa (154 aa).

N-acetylalanine is present on Ala-2. The interval 2 to 33 is polar; it reads ADRDRSYRTFDQVVRGDRTNYQSGPSTTQVLT. 3 helical membrane passes run 31–51, 65–85, and 86–106; these read VLTV…AGLT, LFVI…MAVA, and GFLS…YVFN. A hydrophobic region spans residues 34-105; that stretch reads VLTLLPIGGT…TGLSSLSYVF (72 aa).

This sequence belongs to the oleosin family.

The protein resides in the lipid droplet. Its subcellular location is the membrane. In terms of biological role, may have a structural role to stabilize the lipid body during desiccation of the seed by preventing coalescence of the oil. Probably interacts with both lipid and phospholipid moieties of lipid bodies. May also provide recognition signals for specific lipase anchorage in lipolysis during seedling growth. This chain is Oleosin 16.4 kDa (MATP7), found in Gossypium hirsutum (Upland cotton).